The following is a 227-amino-acid chain: Cytochrome c oxidase subunit 2 (227 aa).

Over 1–14 (MAYPFQLGFQDAAS) the chain is Mitochondrial intermembrane. Residues 15–45 (PIMEELLHFHDHTLMIVFLISSLVLYIITLM) form a helical membrane-spanning segment. Residues 46–59 (LTTKLTHTSTMDAQ) are Mitochondrial matrix-facing. The chain crosses the membrane as a helical span at residues 60–87 (EVETVWTILPAIILILIALPSLRILYMM). Over 88 to 227 (DEVNNPSLTV…VFEKWSVSML (140 aa)) the chain is Mitochondrial intermembrane. The Cu cation site is built by histidine 161, cysteine 196, glutamate 198, cysteine 200, histidine 204, and methionine 207. Glutamate 198 contributes to the Mg(2+) binding site.

It belongs to the cytochrome c oxidase subunit 2 family. In terms of assembly, component of the cytochrome c oxidase (complex IV, CIV), a multisubunit enzyme composed of 14 subunits. The complex is composed of a catalytic core of 3 subunits MT-CO1, MT-CO2 and MT-CO3, encoded in the mitochondrial DNA, and 11 supernumerary subunits COX4I, COX5A, COX5B, COX6A, COX6B, COX6C, COX7A, COX7B, COX7C, COX8 and NDUFA4, which are encoded in the nuclear genome. The complex exists as a monomer or a dimer and forms supercomplexes (SCs) in the inner mitochondrial membrane with NADH-ubiquinone oxidoreductase (complex I, CI) and ubiquinol-cytochrome c oxidoreductase (cytochrome b-c1 complex, complex III, CIII), resulting in different assemblies (supercomplex SCI(1)III(2)IV(1) and megacomplex MCI(2)III(2)IV(2)). Found in a complex with TMEM177, COA6, COX18, COX20, SCO1 and SCO2. Interacts with TMEM177 in a COX20-dependent manner. Interacts with COX20. Interacts with COX16. Requires Cu cation as cofactor.

It localises to the mitochondrion inner membrane. The catalysed reaction is 4 Fe(II)-[cytochrome c] + O2 + 8 H(+)(in) = 4 Fe(III)-[cytochrome c] + 2 H2O + 4 H(+)(out). Component of the cytochrome c oxidase, the last enzyme in the mitochondrial electron transport chain which drives oxidative phosphorylation. The respiratory chain contains 3 multisubunit complexes succinate dehydrogenase (complex II, CII), ubiquinol-cytochrome c oxidoreductase (cytochrome b-c1 complex, complex III, CIII) and cytochrome c oxidase (complex IV, CIV), that cooperate to transfer electrons derived from NADH and succinate to molecular oxygen, creating an electrochemical gradient over the inner membrane that drives transmembrane transport and the ATP synthase. Cytochrome c oxidase is the component of the respiratory chain that catalyzes the reduction of oxygen to water. Electrons originating from reduced cytochrome c in the intermembrane space (IMS) are transferred via the dinuclear copper A center (CU(A)) of subunit 2 and heme A of subunit 1 to the active site in subunit 1, a binuclear center (BNC) formed by heme A3 and copper B (CU(B)). The BNC reduces molecular oxygen to 2 water molecules using 4 electrons from cytochrome c in the IMS and 4 protons from the mitochondrial matrix. This is Cytochrome c oxidase subunit 2 (MT-CO2) from Balaenoptera physalus (Fin whale).